Reading from the N-terminus, the 396-residue chain is uncharacterized protein (396 aa).

[4Fe-4S] cluster contacts are provided by C8, C14, C17, and C95. S-adenosyl-L-methionine-binding residues include Q229, Y258, E279, and D325. C352 functions as the Nucleophile in the catalytic mechanism.

The protein belongs to the class I-like SAM-binding methyltransferase superfamily. RNA M5U methyltransferase family.

This is an uncharacterized protein from Chlamydia trachomatis serovar D (strain ATCC VR-885 / DSM 19411 / UW-3/Cx).